The primary structure comprises 413 residues: CinA-like protein (413 aa).

The protein belongs to the CinA family.

This is CinA-like protein from Desulfotalea psychrophila (strain LSv54 / DSM 12343).